The primary structure comprises 1402 residues: MNQEVMNLFNGQVPAQNFDSIRISIASPEKILSWSYGEIKKPETINYRTFKPERDGLFCARIFGPIKDYECLCGKYKRMKYKGIICEKCGVEVTLSRVRRERMGHIELAAPVAHIWFLKSLPSRISTLLDMTLKDVERVLYFENYIVTEPGLTALKEHQLLTEEEYMLAVDEYGEDQFTAMIGAEAIYEMLASMNLEKIAGDLRSELADTTSDLKQKKLMKRLKIVENFMESGNRPEWMIMKVVPVIPPDLRPLVPLDGGRFATSDLNDLYRRVINRNNRLKRLIELRAPGIIIRNEKRMLQESVDALFDNGRRGRVITGANKRPLKSLSDMLKGKQGRFRQNLLGKRVDYSGRSVIVTGPELKLHQCGLPKKMALELFKPFIYARLDAKGYSSTVKQAKKLVEKEKPEVWDILDEVIREHPVLLNRAPTLHRLGIQAFEPTLVEGKAIQLHPLVCTAFNADFDGDQMAVHVPLSLEAQLEARVLMMSTNNILHPANGAPIIVPSQDMVLGLYYLSILNQNEPGEGMAFSDLGELHHALESKVVTLHTKIRGRFKSVDEDGKPYSKIYETTPGRLLIGELLPKNGKVPFDICNQEMTKKNISKMIDTVYRHCGQKDTVIFCDRIMQLGFSHACRAGISFGKDDMVIPATKAKIVADTENLVKEYEQQYNDGLITQGEKYNKVVDAWGKATEKVAEEMMARIKAVEFDENTGRQKPMNSIYMMSHSGARGSPNQMRQLGGMRGLMAKPSGEIIETPIISNFKEGLTVNEYFNSTHGARKGLADTALKTANSGYLTRRLVDVAQDCIVTHVDCGTETGLTMTAIVDAGQVVASLGARILGRTALDDIDHPVTGERIVDAGKMILEPDVIEIEKAGIQSIRIRSALTCEIQTGVCSVCYGRDLARGTPVNMGEAVGVIAAQSIGEPGTQLTMRTFHLGGTATVVDQSFLEASYEGTVQIKNRNVLRNSEGSLVAMGRNMTVQILDERGVERSSQRVAYGSKLHVDEGDKVKRGQRLAEWDPYTRPMMTEVAGTVQFEDLVDGLSVLEATDESTGITKRQVIDWRSTPRGSDLKPAIVIKDASGNVAKLSRGGDARFLLSVDAILSVEPGTKVSQGDVLARSPLESAKTKDITGGLPRVAELFEARRPKDHAIIAEIDGTIRLGRDYKNKRRVIIEPAEDGVEPVEYLIPKGKPFHLQDGDYIEKGDYILDGNPAPHDILAIKGVEALASYLVNEIQEVYRLQGVVINDKHIEVIVRQMLQKVEITDAGDSTYIVGDNVDRIELEDVNDHLIEQGKKPASGEPVLLGITKASLQTPSFISAASFQETTKVLTEAAIAGKTDGLQGLKENVIVGRLIPAGTGGTMTQIRRIATSRDELILEERRKGTGAAVATPMLQDMAENAPAAE.

Residues cysteine 71, cysteine 73, cysteine 86, and cysteine 89 each contribute to the Zn(2+) site. Residues aspartate 462, aspartate 464, and aspartate 466 each coordinate Mg(2+). Zn(2+) contacts are provided by cysteine 811, cysteine 885, cysteine 892, and cysteine 895.

It belongs to the RNA polymerase beta' chain family. The RNAP catalytic core consists of 2 alpha, 1 beta, 1 beta' and 1 omega subunit. When a sigma factor is associated with the core the holoenzyme is formed, which can initiate transcription. Mg(2+) is required as a cofactor. It depends on Zn(2+) as a cofactor.

It carries out the reaction RNA(n) + a ribonucleoside 5'-triphosphate = RNA(n+1) + diphosphate. DNA-dependent RNA polymerase catalyzes the transcription of DNA into RNA using the four ribonucleoside triphosphates as substrates. The protein is DNA-directed RNA polymerase subunit beta' of Rhizobium etli (strain ATCC 51251 / DSM 11541 / JCM 21823 / NBRC 15573 / CFN 42).